Here is a 301-residue protein sequence, read N- to C-terminus: 2-dehydropantoate 2-reductase (301 aa).

Residues 7 to 12, lysine 74, asparagine 99, and alanine 123 each bind NADP(+); that span reads GAGAIG. Lysine 179 (proton donor) is an active-site residue. Residues lysine 179, asparagine 183, asparagine 187, asparagine 197, and 246–249 each bind substrate; that span reads NYNS. Glutamate 261 serves as a coordination point for NADP(+).

It belongs to the ketopantoate reductase family.

It is found in the cytoplasm. The enzyme catalyses (R)-pantoate + NAD(+) = 2-dehydropantoate + NADH + H(+). It carries out the reaction (R)-pantoate + NADP(+) = 2-dehydropantoate + NADPH + H(+). Its pathway is cofactor biosynthesis; coenzyme A biosynthesis. In terms of biological role, catalyzes the NAD(P)H-dependent reduction of ketopantoate into pantoic acid. In Pyrococcus horikoshii (strain ATCC 700860 / DSM 12428 / JCM 9974 / NBRC 100139 / OT-3), this protein is 2-dehydropantoate 2-reductase.